We begin with the raw amino-acid sequence, 547 residues long: Undecaprenyl phosphate-alpha-4-amino-4-deoxy-L-arabinose arabinosyl transferase (547 aa).

10 consecutive transmembrane segments (helical) span residues 83-103 (FASA…ALQL), 111-131 (FLAS…TYSV), 174-194 (FLTK…PYVI), 205-225 (FGPL…IAVH), 253-273 (APFW…LGLL), 286-306 (ISPE…FFSI), 311-331 (LLTY…ANAV), 346-366 (AWLN…LAFS), 378-398 (GALA…FIQL), and 408-428 (SALC…QSLI).

Belongs to the glycosyltransferase 83 family.

It localises to the cell inner membrane. It catalyses the reaction 4-amino-4-deoxy-alpha-L-arabinopyranosyl di-trans,octa-cis-undecaprenyl phosphate + lipid IVA = lipid IIA + di-trans,octa-cis-undecaprenyl phosphate.. The protein operates within lipopolysaccharide metabolism; 4-amino-4-deoxy-beta-L-arabinose-lipid A biosynthesis. Functionally, catalyzes the transfer of the L-Ara4N moiety of the glycolipid undecaprenyl phosphate-alpha-L-Ara4N to lipid A. The modified arabinose is attached to lipid A and is required for resistance to polymyxin and cationic antimicrobial peptides. The polypeptide is Undecaprenyl phosphate-alpha-4-amino-4-deoxy-L-arabinose arabinosyl transferase (Aeromonas hydrophila subsp. hydrophila (strain ATCC 7966 / DSM 30187 / BCRC 13018 / CCUG 14551 / JCM 1027 / KCTC 2358 / NCIMB 9240 / NCTC 8049)).